The chain runs to 246 residues: tRNA (guanine-N(1)-)-methyltransferase (246 aa).

S-adenosyl-L-methionine contacts are provided by residues G112 and 131–136 (IGDYVL).

It belongs to the RNA methyltransferase TrmD family. Homodimer.

It is found in the cytoplasm. It carries out the reaction guanosine(37) in tRNA + S-adenosyl-L-methionine = N(1)-methylguanosine(37) in tRNA + S-adenosyl-L-homocysteine + H(+). Its function is as follows. Specifically methylates guanosine-37 in various tRNAs. The chain is tRNA (guanine-N(1)-)-methyltransferase from Fervidobacterium nodosum (strain ATCC 35602 / DSM 5306 / Rt17-B1).